The primary structure comprises 256 residues: Phosphonates import ATP-binding protein PhnC (256 aa).

The 245-residue stretch at 7–251 folds into the ABC transporter domain; that stretch reads IEMKNVTKVY…VFDNIYNGGK (245 aa). Residue 40–47 coordinates ATP; sequence GLSGAGKS.

Belongs to the ABC transporter superfamily. Phosphonates importer (TC 3.A.1.9.1) family. The complex is composed of two ATP-binding proteins (PhnC), two transmembrane proteins (PhnE) and a solute-binding protein (PhnD).

The protein localises to the cell membrane. It catalyses the reaction phosphonate(out) + ATP + H2O = phosphonate(in) + ADP + phosphate + H(+). In terms of biological role, part of the ABC transporter complex PhnCDE involved in phosphonates import. Responsible for energy coupling to the transport system. The chain is Phosphonates import ATP-binding protein PhnC from Lactobacillus delbrueckii subsp. bulgaricus (strain ATCC 11842 / DSM 20081 / BCRC 10696 / JCM 1002 / NBRC 13953 / NCIMB 11778 / NCTC 12712 / WDCM 00102 / Lb 14).